A 446-amino-acid chain; its full sequence is MREIVHIQAGQCGNQIGTKFWEVISDEHGIDPAGGYVGDSALQLERINVYYNESSSQKYVPRAALVDLEPGTMDSVRSGPFGQLFRPDNFIFGQTGAGNNWAKGHYTEGAELVDAVLDVVRKECEHCDCLQGFQLTHSLGGGTGSGMGTLLISKIREEFPDRIMNTFSVMPSPKVSDTVVEPYNATLSVHQLVENTDETYCIDNEALYDICFRTLKLTTPTYGDLNHLVSATMSGVTTSLRFPGQLNADLRKLAVNMVPFPRLHFFMPGFAPLTSRGSQQYRALTVPELTQQMFDARNMMAACDPRHGRYLTVATVFRGPMSMKEVDEQMLAIQSKNSSYFVEWIPNNVKVAVCDIPPRGLKMASTFIGNSTAIQELFKRISEQFSAMFRRKAFLHWFTGEGMDEMEFTEAESNMNDLVSEYQQYQDATANDGEEAFEDEEEEIDG.

The MREI motif signature appears at 1-4 (MREI). Positions 11, 69, 138, 142, 143, and 144 each coordinate GTP. Glu-69 is a binding site for Mg(2+). Ser-172 carries the post-translational modification Phosphoserine; by CDK1. GTP-binding residues include Asn-204 and Asn-226. Glu-438 bears the 5-glutamyl polyglutamate mark.

The protein belongs to the tubulin family. Dimer of alpha and beta chains. A typical microtubule is a hollow water-filled tube with an outer diameter of 25 nm and an inner diameter of 15 nM. Alpha-beta heterodimers associate head-to-tail to form protofilaments running lengthwise along the microtubule wall with the beta-tubulin subunit facing the microtubule plus end conferring a structural polarity. Microtubules usually have 13 protofilaments but different protofilament numbers can be found in some organisms and specialized cells. The cofactor is Mg(2+). Post-translationally, some glutamate residues at the C-terminus are polyglutamylated, resulting in polyglutamate chains on the gamma-carboxyl group. Polyglutamylation plays a key role in microtubule severing by spastin (SPAST). SPAST preferentially recognizes and acts on microtubules decorated with short polyglutamate tails: severing activity by SPAST increases as the number of glutamates per tubulin rises from one to eight, but decreases beyond this glutamylation threshold. Glutamylation is also involved in cilia motility. Some glutamate residues at the C-terminus are monoglycylated but not polyglycylated due to the absence of functional TTLL10 in human. Monoglycylation is mainly limited to tubulin incorporated into cilia and flagella axonemes, which is required for their stability and maintenance. Flagella glycylation controls sperm motility. Both polyglutamylation and monoglycylation can coexist on the same protein on adjacent residues, and lowering glycylation levels increases polyglutamylation, and reciprocally. In terms of processing, phosphorylated on Ser-172 by CDK1 during the cell cycle, from metaphase to telophase, but not in interphase. This phosphorylation inhibits tubulin incorporation into microtubules. Ubiquitous. Maximal expression in breast and lung, where it represents around 10% of all beta-tubulins. Largely decreased expression in most cancerous tissues.

Its subcellular location is the cytoplasm. The protein localises to the cytoskeleton. In terms of biological role, tubulin is the major constituent of microtubules, a cylinder consisting of laterally associated linear protofilaments composed of alpha- and beta-tubulin heterodimers. Microtubules grow by the addition of GTP-tubulin dimers to the microtubule end, where a stabilizing cap forms. Below the cap, tubulin dimers are in GDP-bound state, owing to GTPase activity of alpha-tubulin. This Homo sapiens (Human) protein is Tubulin beta-6 chain (TUBB6).